The chain runs to 211 residues: Probable oligoribonuclease (211 aa).

Residues 38–202 enclose the Exonuclease domain; the sequence is IVWMDLEMTG…DDIRESIKEL (165 aa). Tyr159 is a catalytic residue.

Belongs to the oligoribonuclease family.

3'-to-5' exoribonuclease specific for small oligoribonucleotides. The polypeptide is Probable oligoribonuclease (Drosophila melanogaster (Fruit fly)).